Here is a 324-residue protein sequence, read N- to C-terminus: Adenine deaminase (324 aa).

Positions 11, 13, and 189 each coordinate Zn(2+). Residue glutamate 192 is the Proton donor of the active site. Zn(2+) is bound at residue aspartate 270. Residue aspartate 271 participates in substrate binding.

The protein belongs to the metallo-dependent hydrolases superfamily. Adenosine and AMP deaminases family. Adenine deaminase type 2 subfamily. Requires Zn(2+) as cofactor.

It carries out the reaction adenine + H2O + H(+) = hypoxanthine + NH4(+). In terms of biological role, catalyzes the hydrolytic deamination of adenine to hypoxanthine. Plays an important role in the purine salvage pathway and in nitrogen catabolism. This Sinorhizobium fredii (strain NBRC 101917 / NGR234) protein is Adenine deaminase.